A 272-amino-acid polypeptide reads, in one-letter code: Phosphate import ATP-binding protein PstB (272 aa).

Residues 18–257 (VSIQNATISY…FNDTDKIFNA (240 aa)) enclose the ABC transporter domain. 50 to 57 (GPSGCGKS) serves as a coordination point for ATP.

The protein belongs to the ABC transporter superfamily. Phosphate importer (TC 3.A.1.7) family. In terms of assembly, the complex is composed of two ATP-binding proteins (PstB), two transmembrane proteins (PstC and PstA) and a solute-binding protein (PstS).

The protein localises to the cell inner membrane. It carries out the reaction phosphate(out) + ATP + H2O = ADP + 2 phosphate(in) + H(+). In terms of biological role, part of the ABC transporter complex PstSACB involved in phosphate import. Responsible for energy coupling to the transport system. This chain is Phosphate import ATP-binding protein PstB, found in Synechococcus sp. (strain CC9311).